We begin with the raw amino-acid sequence, 740 residues long: Catalase-peroxidase (740 aa).

The tryptophyl-tyrosyl-methioninium (Trp-Tyr) (with M-256) cross-link spans 102-229 (WHAAGTYRTG…LAAIQMGLIY (128 aa)). H103 functions as the Proton acceptor in the catalytic mechanism. Residues 111–130 (GDGRGGSSSGQQRFAPLNSW) are disordered. The tryptophyl-tyrosyl-methioninium (Tyr-Met) (with W-102) cross-link spans 229-256 (YVNPEGPGGDPHDPEGMARDMRETFARM). Heme b is bound at residue H271.

The protein belongs to the peroxidase family. Peroxidase/catalase subfamily. In terms of assembly, homodimer or homotetramer. Requires heme b as cofactor. In terms of processing, formation of the three residue Trp-Tyr-Met cross-link is important for the catalase, but not the peroxidase activity of the enzyme.

It carries out the reaction H2O2 + AH2 = A + 2 H2O. It catalyses the reaction 2 H2O2 = O2 + 2 H2O. In terms of biological role, bifunctional enzyme with both catalase and broad-spectrum peroxidase activity. In Erythrobacter litoralis (strain HTCC2594), this protein is Catalase-peroxidase.